The primary structure comprises 310 residues: D-alanine--D-alanine ligase (310 aa).

The 196-residue stretch at 107–302 folds into the ATP-grasp domain; that stretch reads KQAFQAARLT…FEDLVERILA (196 aa). 135 to 188 is an ATP binding site; the sequence is EFSLPVVVKPSQEGSSVGVSIVKKESEFAAAMKEAFRYDREILVEQFIKGSEVQ. The Mg(2+) site is built by Asp256, Glu269, and Asn271.

This sequence belongs to the D-alanine--D-alanine ligase family. Requires Mg(2+) as cofactor. It depends on Mn(2+) as a cofactor.

It is found in the cytoplasm. The catalysed reaction is 2 D-alanine + ATP = D-alanyl-D-alanine + ADP + phosphate + H(+). Its pathway is cell wall biogenesis; peptidoglycan biosynthesis. Functionally, cell wall formation. In Geotalea uraniireducens (strain Rf4) (Geobacter uraniireducens), this protein is D-alanine--D-alanine ligase.